The sequence spans 228 residues: Protein crossbronx homolog (228 aa).

The UBC core domain occupies 14 to 168 (LQEYKILAEY…VEQCVEDSQR (155 aa)).

This sequence belongs to the ubiquitin-conjugating enzyme family. FTS subfamily.

The polypeptide is Protein crossbronx homolog (Anopheles gambiae (African malaria mosquito)).